Consider the following 210-residue polypeptide: Probable GTP-binding protein EngB (210 aa).

Residues 25–199 (CGIEVAFAGR…RQKLDSWFSE (175 aa)) form the EngB-type G domain. GTP contacts are provided by residues 33–40 (GRSNAGKS), 60–64 (GRTQL), 78–81 (DLPG), 145–148 (TKAD), and 178–180 (FSS). Residues Ser40 and Thr62 each coordinate Mg(2+).

Belongs to the TRAFAC class TrmE-Era-EngA-EngB-Septin-like GTPase superfamily. EngB GTPase family. Mg(2+) serves as cofactor.

Necessary for normal cell division and for the maintenance of normal septation. In Salmonella paratyphi C (strain RKS4594), this protein is Probable GTP-binding protein EngB.